The chain runs to 264 residues: Thymidylate synthase (264 aa).

Position 21 (R21) interacts with dUMP. (6R)-5,10-methylene-5,6,7,8-tetrahydrofolate is bound at residue H51. 126–127 (RR) provides a ligand contact to dUMP. The Nucleophile role is filled by C146. DUMP-binding positions include 166 to 169 (RSCD), N177, and 207 to 209 (HLY). D169 lines the (6R)-5,10-methylene-5,6,7,8-tetrahydrofolate pocket. A (6R)-5,10-methylene-5,6,7,8-tetrahydrofolate-binding site is contributed by A263.

The protein belongs to the thymidylate synthase family. Bacterial-type ThyA subfamily. Homodimer.

It is found in the cytoplasm. The catalysed reaction is dUMP + (6R)-5,10-methylene-5,6,7,8-tetrahydrofolate = 7,8-dihydrofolate + dTMP. The protein operates within pyrimidine metabolism; dTTP biosynthesis. In terms of biological role, catalyzes the reductive methylation of 2'-deoxyuridine-5'-monophosphate (dUMP) to 2'-deoxythymidine-5'-monophosphate (dTMP) while utilizing 5,10-methylenetetrahydrofolate (mTHF) as the methyl donor and reductant in the reaction, yielding dihydrofolate (DHF) as a by-product. This enzymatic reaction provides an intracellular de novo source of dTMP, an essential precursor for DNA biosynthesis. This is Thymidylate synthase from Salmonella typhimurium (strain LT2 / SGSC1412 / ATCC 700720).